Reading from the N-terminus, the 375-residue chain is Queuine tRNA-ribosyltransferase (375 aa).

Residue Asp94 is the Proton acceptor of the active site. Residues 94–98, Asp148, Gln191, and Gly218 contribute to the substrate site; that span reads DSGGF. Residues 249–255 are RNA binding; it reads GVGSPDD. Residue Asp268 is the Nucleophile of the active site. An RNA binding; important for wobble base 34 recognition region spans residues 273–277; sequence TRIAR. Cys306, Cys308, Cys311, and His337 together coordinate Zn(2+).

This sequence belongs to the queuine tRNA-ribosyltransferase family. As to quaternary structure, homodimer. Within each dimer, one monomer is responsible for RNA recognition and catalysis, while the other monomer binds to the replacement base PreQ1. It depends on Zn(2+) as a cofactor.

It carries out the reaction 7-aminomethyl-7-carbaguanine + guanosine(34) in tRNA = 7-aminomethyl-7-carbaguanosine(34) in tRNA + guanine. It participates in tRNA modification; tRNA-queuosine biosynthesis. Catalyzes the base-exchange of a guanine (G) residue with the queuine precursor 7-aminomethyl-7-deazaguanine (PreQ1) at position 34 (anticodon wobble position) in tRNAs with GU(N) anticodons (tRNA-Asp, -Asn, -His and -Tyr). Catalysis occurs through a double-displacement mechanism. The nucleophile active site attacks the C1' of nucleotide 34 to detach the guanine base from the RNA, forming a covalent enzyme-RNA intermediate. The proton acceptor active site deprotonates the incoming PreQ1, allowing a nucleophilic attack on the C1' of the ribose to form the product. After dissociation, two additional enzymatic reactions on the tRNA convert PreQ1 to queuine (Q), resulting in the hypermodified nucleoside queuosine (7-(((4,5-cis-dihydroxy-2-cyclopenten-1-yl)amino)methyl)-7-deazaguanosine). The chain is Queuine tRNA-ribosyltransferase from Thermoanaerobacter sp. (strain X514).